A 285-amino-acid chain; its full sequence is Ribosomal RNA small subunit methyltransferase I (285 aa).

The protein belongs to the methyltransferase superfamily. RsmI family.

Its subcellular location is the cytoplasm. The enzyme catalyses cytidine(1402) in 16S rRNA + S-adenosyl-L-methionine = 2'-O-methylcytidine(1402) in 16S rRNA + S-adenosyl-L-homocysteine + H(+). Functionally, catalyzes the 2'-O-methylation of the ribose of cytidine 1402 (C1402) in 16S rRNA. The protein is Ribosomal RNA small subunit methyltransferase I of Mycobacterium tuberculosis (strain CDC 1551 / Oshkosh).